A 323-amino-acid polypeptide reads, in one-letter code: tRNA U34 carboxymethyltransferase (323 aa).

Carboxy-S-adenosyl-L-methionine is bound by residues K91, W105, K110, G130, 152–154, 181–182, M196, Y200, and R315; these read DPT and IE.

Belongs to the class I-like SAM-binding methyltransferase superfamily. CmoB family. In terms of assembly, homotetramer.

The catalysed reaction is carboxy-S-adenosyl-L-methionine + 5-hydroxyuridine(34) in tRNA = 5-carboxymethoxyuridine(34) in tRNA + S-adenosyl-L-homocysteine + H(+). In terms of biological role, catalyzes carboxymethyl transfer from carboxy-S-adenosyl-L-methionine (Cx-SAM) to 5-hydroxyuridine (ho5U) to form 5-carboxymethoxyuridine (cmo5U) at position 34 in tRNAs. This chain is tRNA U34 carboxymethyltransferase, found in Salmonella enteritidis PT4 (strain P125109).